The sequence spans 702 residues: Methionine--tRNA ligase (702 aa).

The short motif at 23 to 33 (PYANGPLHLGH) is the 'HIGH' region element. Residues cysteine 154, cysteine 157, cysteine 167, and cysteine 170 each contribute to the Zn(2+) site. Residues 341-345 (KMSKS) carry the 'KMSKS' region motif. Lysine 344 contacts ATP. The interval 562–593 (LAPPPASAKQQNASMSNTAPPPTAEEPETTAP) is disordered. Polar residues predominate over residues 569 to 578 (AKQQNASMSN). In terms of domain architecture, tRNA-binding spans 599-702 (DFAKLDLRIG…SSAQPGMPVR (104 aa)).

Belongs to the class-I aminoacyl-tRNA synthetase family. MetG type 1 subfamily. In terms of assembly, homodimer. The cofactor is Zn(2+).

The protein resides in the cytoplasm. The catalysed reaction is tRNA(Met) + L-methionine + ATP = L-methionyl-tRNA(Met) + AMP + diphosphate. In terms of biological role, is required not only for elongation of protein synthesis but also for the initiation of all mRNA translation through initiator tRNA(fMet) aminoacylation. In Xylella fastidiosa (strain M23), this protein is Methionine--tRNA ligase.